The primary structure comprises 568 residues: Sesquiterpene synthase 14 (568 aa).

Mg(2+)-binding residues include Asp-319, Asp-323, Asp-463, and Glu-471. Positions 319-323 match the DDXXD motif motif; it reads DDLYD.

It belongs to the terpene synthase family. Tpsa subfamily. Requires Mg(2+) as cofactor. It depends on Mn(2+) as a cofactor. In terms of tissue distribution, mostly expressed in roots, to a lower extent in flowers and, at low levels, in fruits.

The enzyme catalyses (2Z,6Z)-farnesyl diphosphate = (E)-alpha-bisabolene + diphosphate. The catalysed reaction is (2Z,6Z)-farnesyl diphosphate = beta-bisabolene + diphosphate. It carries out the reaction (2E,6E)-farnesyl diphosphate = beta-bisabolene + diphosphate. It catalyses the reaction (2E,6E)-farnesyl diphosphate = (Z)-gamma-bisabolene + diphosphate. The enzyme catalyses (2E,6E)-farnesyl diphosphate = (E)-gamma-bisabolene + diphosphate. The catalysed reaction is (2Z,6Z)-farnesyl diphosphate = (E)-gamma-bisabolene + diphosphate. It participates in secondary metabolite biosynthesis; terpenoid biosynthesis. Its function is as follows. Sesquiterpene synthase involved in the biosynthesis of volatile compounds. Mediates the conversion of (2E,6E)-farnesyl diphosphate ((EE)-FPP) into beta-bisabolene, and of (2Z,6Z)-farnesyl diphosphate ((ZZ)-FPP) into alpha-bisabolene, but also smaller amounts of (Z)-gamma-bisabolene, (E)-gamma-bisabolene and nerolidol. The polypeptide is Sesquiterpene synthase 14 (Solanum lycopersicum (Tomato)).